Here is a 211-residue protein sequence, read N- to C-terminus: Endo-1,4-beta-xylanase 6 (211 aa).

A signal peptide spans 1–16 (MKVTAAFAGLLVTALA). A GH11 domain is found at 19-210 (APEPVLVSRS…GAGSASVTIS (192 aa)). Catalysis depends on Glu-106, which acts as the Nucleophile. Glu-197 serves as the catalytic Proton donor.

The protein belongs to the glycosyl hydrolase 11 (cellulase G) family.

It localises to the secreted. It catalyses the reaction Endohydrolysis of (1-&gt;4)-beta-D-xylosidic linkages in xylans.. The protein operates within glycan degradation; xylan degradation. Endo-1,4-beta-xylanase involved in the hydrolysis of xylan, a major structural heterogeneous polysaccharide found in plant biomass representing the second most abundant polysaccharide in the biosphere, after cellulose. The polypeptide is Endo-1,4-beta-xylanase 6 (XYN6) (Aspergillus niger).